Consider the following 428-residue polypeptide: Enolase (428 aa).

Gln-163 provides a ligand contact to (2R)-2-phosphoglycerate. The active-site Proton donor is the Glu-205. Mg(2+) contacts are provided by Asp-242, Glu-285, and Asp-312. The (2R)-2-phosphoglycerate site is built by Lys-337, Arg-366, Ser-367, and Lys-388. Lys-337 serves as the catalytic Proton acceptor.

Belongs to the enolase family. Mg(2+) is required as a cofactor.

It localises to the cytoplasm. It is found in the secreted. The protein resides in the cell surface. It carries out the reaction (2R)-2-phosphoglycerate = phosphoenolpyruvate + H2O. It participates in carbohydrate degradation; glycolysis; pyruvate from D-glyceraldehyde 3-phosphate: step 4/5. Catalyzes the reversible conversion of 2-phosphoglycerate (2-PG) into phosphoenolpyruvate (PEP). It is essential for the degradation of carbohydrates via glycolysis. The polypeptide is Enolase (Rhodopirellula baltica (strain DSM 10527 / NCIMB 13988 / SH1)).